Consider the following 202-residue polypeptide: Venom allergen 5.02 (202 aa).

4 disulfides stabilise this stretch: cysteine 4–cysteine 16, cysteine 8–cysteine 101, cysteine 26–cysteine 94, and cysteine 168–cysteine 185. Positions 46 to 187 (KQHNEFRQKV…WHRHYLVCNY (142 aa)) constitute an SCP domain.

It belongs to the CRISP family. Venom allergen 5-like subfamily. Expressed by the venom gland.

It is found in the secreted. This chain is Venom allergen 5.02, found in Vespa crabro (European hornet).